The primary structure comprises 286 residues: 4-hydroxybenzoate octaprenyltransferase (286 aa).

9 helical membrane passes run 19–39, 42–62, 92–112, 115–135, 137–157, 161–181, 206–226, 233–253, and 264–284; these read AGWL…SHGF, WHLL…GCCV, ALVL…TTNA, IAWS…KRYV, MPQA…FAAV, VPLL…AYDT, FDVA…ALAL, AIYW…GWLI, and AFRL…LSYL.

It belongs to the UbiA prenyltransferase family. Mg(2+) serves as cofactor.

Its subcellular location is the cell inner membrane. It carries out the reaction all-trans-octaprenyl diphosphate + 4-hydroxybenzoate = 4-hydroxy-3-(all-trans-octaprenyl)benzoate + diphosphate. It functions in the pathway cofactor biosynthesis; ubiquinone biosynthesis. Functionally, catalyzes the prenylation of para-hydroxybenzoate (PHB) with an all-trans polyprenyl group. Mediates the second step in the final reaction sequence of ubiquinone-8 (UQ-8) biosynthesis, which is the condensation of the polyisoprenoid side chain with PHB, generating the first membrane-bound Q intermediate 3-octaprenyl-4-hydroxybenzoate. This is 4-hydroxybenzoate octaprenyltransferase from Polaromonas sp. (strain JS666 / ATCC BAA-500).